Here is a 59-residue protein sequence, read N- to C-terminus: MAKTIKITQTRSAIGRLPKHKATLLGLGLRRIGHTVEREDTPAVRGMVNAVSFMVKVEE.

The protein belongs to the universal ribosomal protein uL30 family. In terms of assembly, part of the 50S ribosomal subunit.

This chain is Large ribosomal subunit protein uL30, found in Citrobacter koseri (strain ATCC BAA-895 / CDC 4225-83 / SGSC4696).